The primary structure comprises 214 residues: Pyrrolidone-carboxylate peptidase (214 aa).

Active-site residues include Glu-79, Cys-142, and His-166.

It belongs to the peptidase C15 family. Homotetramer.

It localises to the cytoplasm. It carries out the reaction Release of an N-terminal pyroglutamyl group from a polypeptide, the second amino acid generally not being Pro.. Removes 5-oxoproline from various penultimate amino acid residues except L-proline. In Fusobacterium nucleatum subsp. nucleatum (strain ATCC 25586 / DSM 15643 / BCRC 10681 / CIP 101130 / JCM 8532 / KCTC 2640 / LMG 13131 / VPI 4355), this protein is Pyrrolidone-carboxylate peptidase.